A 244-amino-acid polypeptide reads, in one-letter code: Phosphoadenosine 5'-phosphosulfate reductase (244 aa).

Cys-239 serves as the catalytic Nucleophile; cysteine thiosulfonate intermediate.

Belongs to the PAPS reductase family. CysH subfamily.

The protein resides in the cytoplasm. It carries out the reaction [thioredoxin]-disulfide + sulfite + adenosine 3',5'-bisphosphate + 2 H(+) = [thioredoxin]-dithiol + 3'-phosphoadenylyl sulfate. The protein operates within sulfur metabolism; hydrogen sulfide biosynthesis; sulfite from sulfate: step 3/3. Catalyzes the formation of sulfite from phosphoadenosine 5'-phosphosulfate (PAPS) using thioredoxin as an electron donor. This chain is Phosphoadenosine 5'-phosphosulfate reductase, found in Pectobacterium atrosepticum (strain SCRI 1043 / ATCC BAA-672) (Erwinia carotovora subsp. atroseptica).